Reading from the N-terminus, the 356-residue chain is MSRRHRTFPVKVGSVTIGGTAPVTIQSMTNTDTKDTEKTLAQIKDLVEAGCQLVRVAIPDEESVNSFKTLTQFSPVPLIADIHFSYQLAIKAIEAGASKIRINPGNIGSRQRVAKVVEKAKTHNVPIRVGINSGSVEKNLLQKYGGPTPSALVESAVNNVMMLSEMGFGDVVVSIKASDVNTTVKANQEFATRLPNPLHLGITEAGTIKQGTIKSSVGIGTLLSHGIGDTLRVSLSGSPIEEVSVARGILSSLNLAEGPRIVSCPTCARSNISVEDLASTVEDRLKDLNTSLTVAVMGCEVNGPGEAKEADIGIAGSKEYGVLFKKGKIIDRVPKNQLLEVLSRAIDEYIDEIHSK.

C264, C267, C299, and E306 together coordinate [4Fe-4S] cluster.

Belongs to the IspG family. Requires [4Fe-4S] cluster as cofactor.

It catalyses the reaction (2E)-4-hydroxy-3-methylbut-2-enyl diphosphate + oxidized [flavodoxin] + H2O + 2 H(+) = 2-C-methyl-D-erythritol 2,4-cyclic diphosphate + reduced [flavodoxin]. Its pathway is isoprenoid biosynthesis; isopentenyl diphosphate biosynthesis via DXP pathway; isopentenyl diphosphate from 1-deoxy-D-xylulose 5-phosphate: step 5/6. Functionally, converts 2C-methyl-D-erythritol 2,4-cyclodiphosphate (ME-2,4cPP) into 1-hydroxy-2-methyl-2-(E)-butenyl 4-diphosphate. This Natranaerobius thermophilus (strain ATCC BAA-1301 / DSM 18059 / JW/NM-WN-LF) protein is 4-hydroxy-3-methylbut-2-en-1-yl diphosphate synthase (flavodoxin).